The chain runs to 170 residues: Centrin-2 (170 aa).

Residues 1–21 (MQRGALRGASPTARRRLVDRP) are disordered. 4 EF-hand domains span residues 26-61 (DEIE…LGFE), 62-97 (TKNP…KLGD), 99-134 (ESRE…LGET), and 135-170 (MSED…KTFP). The Ca(2+) site is built by Asp-39, Asp-41, Ser-43, Met-45, and Glu-50.

The protein belongs to the centrin family. In terms of assembly, monomer. Does not homooligomerize.

The protein resides in the cytoplasm. It localises to the cytoskeleton. Its subcellular location is the microtubule organizing center. The protein localises to the centrosome. In terms of biological role, in tachyzoites, plays an essential role in microneme secretion that ensures parasite motility and attachment to, invasion of and egress from host cells. Also involved in the architecture of the peripheral annuli where it appears to regulate the localization of PAP2. In association with the myosin motor MyoJ, involved in the constriction of the basal complex at the end of daughter cell division in an actin-dependent manner; the basal complex is a cytoskeletal structure formed at the tachyzoite basal pole during daughter cell formation. May be involved in parasite replication. The protein is Centrin-2 of Toxoplasma gondii (strain ATCC 50611 / Me49).